The chain runs to 446 residues: Exodeoxyribonuclease 7 large subunit (446 aa).

It belongs to the XseA family. Heterooligomer composed of large and small subunits.

The protein resides in the cytoplasm. It carries out the reaction Exonucleolytic cleavage in either 5'- to 3'- or 3'- to 5'-direction to yield nucleoside 5'-phosphates.. In terms of biological role, bidirectionally degrades single-stranded DNA into large acid-insoluble oligonucleotides, which are then degraded further into small acid-soluble oligonucleotides. The polypeptide is Exodeoxyribonuclease 7 large subunit (Acholeplasma laidlawii (strain PG-8A)).